Reading from the N-terminus, the 913-residue chain is Protein translocase subunit SecA (913 aa).

Residues Q87, 105 to 109, and D512 each bind ATP; that span reads GEGKT. 4 residues coordinate Zn(2+): C897, C899, C908, and H909.

This sequence belongs to the SecA family. Monomer and homodimer. Part of the essential Sec protein translocation apparatus which comprises SecA, SecYEG and auxiliary proteins SecDF-YajC and YidC. Zn(2+) is required as a cofactor.

It localises to the cell inner membrane. It is found in the cytoplasm. It carries out the reaction ATP + H2O + cellular proteinSide 1 = ADP + phosphate + cellular proteinSide 2.. In terms of biological role, part of the Sec protein translocase complex. Interacts with the SecYEG preprotein conducting channel. Has a central role in coupling the hydrolysis of ATP to the transfer of proteins into and across the cell membrane, serving both as a receptor for the preprotein-SecB complex and as an ATP-driven molecular motor driving the stepwise translocation of polypeptide chains across the membrane. In Pseudomonas syringae pv. syringae (strain B728a), this protein is Protein translocase subunit SecA.